Here is a 95-residue protein sequence, read N- to C-terminus: Phosphoribosyl-ATP pyrophosphatase (95 aa).

Belongs to the PRA-PH family.

Its subcellular location is the cytoplasm. The enzyme catalyses 1-(5-phospho-beta-D-ribosyl)-ATP + H2O = 1-(5-phospho-beta-D-ribosyl)-5'-AMP + diphosphate + H(+). It functions in the pathway amino-acid biosynthesis; L-histidine biosynthesis; L-histidine from 5-phospho-alpha-D-ribose 1-diphosphate: step 2/9. In Halobacterium salinarum (strain ATCC 29341 / DSM 671 / R1), this protein is Phosphoribosyl-ATP pyrophosphatase.